The following is a 492-amino-acid chain: Cysteine--tRNA ligase (492 aa).

Cys27 is a Zn(2+) binding site. The 'HIGH' region signature appears at 29–39 (VTVYDLCHLGH). Residues Cys211, His236, and Glu240 each contribute to the Zn(2+) site. The 'KMSKS' region motif lies at 268–272 (KMSKS). ATP is bound at residue Lys271.

This sequence belongs to the class-I aminoacyl-tRNA synthetase family. As to quaternary structure, monomer. Zn(2+) serves as cofactor.

The protein resides in the cytoplasm. The enzyme catalyses tRNA(Cys) + L-cysteine + ATP = L-cysteinyl-tRNA(Cys) + AMP + diphosphate. The protein is Cysteine--tRNA ligase of Prochlorococcus marinus (strain MIT 9515).